Reading from the N-terminus, the 270-residue chain is Splicing factor YJU2 (270 aa).

The interval 1 to 32 (MSERKVLNKYIPPDYDPSIRPPKKKKKFQGPN) is disordered. The Zn(2+) site is built by C48, C51, C84, and C87. Positions 251 to 270 (PNFQPPKYAKRKMEKKKVLV) are disordered. The span at 258–270 (YAKRKMEKKKVLV) shows a compositional bias: basic residues.

It belongs to the CWC16 family. YJU2 subfamily. In terms of assembly, component of the spliceosome. Present in the activated B complex, the catalytically activated B* complex which catalyzes the branching, the catalytic step 1 C complex catalyzing the exon ligation, and the postcatalytic P complex containing the ligated exons (mRNA) and the excised lariat intron. Belongs to the 40S cdc5-associated complex (or cwf complex), a spliceosome sub-complex reminiscent of a late-stage spliceosome composed of the U2, U5 and U6 snRNAs and at least brr2, cdc5, cwf2/prp3, cwf3/syf1, cwf4/syf3, cwf5/ecm2, spp42/cwf6, cwf7/spf27, cwf8, cwf9, cwf10, cwf11, cwf12, prp45/cwf13, cwf14, cwf15, cwf16, cwf17, cwf18, cwf19, cwf20, cwf21, cwf22, cwf23, cwf24, cwf25, cwf26, cyp7/cwf27, cwf28, cwf29/ist3, lea1, msl1, prp5/cwf1, prp10, prp12/sap130, prp17, prp22, sap61, sap62, sap114, sap145, slu7, smb1, smd1, smd3, smf1, smg1 and syf2.

It localises to the nucleus. Part of the spliceosome which catalyzes two sequential transesterification reactions, first the excision of the non-coding intron from pre-mRNA and then the ligation of the coding exons to form the mature mRNA. Plays a role in stabilizing the structure of the spliceosome catalytic core and docking of the branch helix into the active site, producing 5'-exon and lariat intron-3'-intermediates. The protein is Splicing factor YJU2 (cwf16) of Schizosaccharomyces pombe (strain 972 / ATCC 24843) (Fission yeast).